A 397-amino-acid chain; its full sequence is pH-sensitive adenylate cyclase MT1302 (397 aa).

The segment at 1–191 (MTDHVREADD…IQDMLFMQLR (191 aa)) is regulatory domain. The segment at 192 to 206 (HMMETEAVNAGERAA) is linker. Residues 211–397 (PGARQVTVAF…QDDDLAGSSP (187 aa)) form a catalytic domain region. A Guanylate cyclase domain is found at 217-325 (TVAFADLVGF…SPVNVASRVT (109 aa)). Residue Asp222 participates in Mn(2+) binding. Lys261 serves as a coordination point for substrate. Residue Asp265 participates in Mn(2+) binding. Arg298 lines the ATP pocket. Asp312 provides a ligand contact to substrate.

Belongs to the adenylyl cyclase class-4/guanylyl cyclase family. Homodimer. The cofactor is Mn(2+). It depends on Mg(2+) as a cofactor.

The enzyme catalyses ATP = 3',5'-cyclic AMP + diphosphate. Its function is as follows. Catalyzes the formation of the second messenger cAMP. This chain is pH-sensitive adenylate cyclase MT1302, found in Mycobacterium tuberculosis (strain CDC 1551 / Oshkosh).